The primary structure comprises 364 residues: Aminomethyltransferase (364 aa).

The protein belongs to the GcvT family. In terms of assembly, the glycine cleavage system is composed of four proteins: P, T, L and H.

It catalyses the reaction N(6)-[(R)-S(8)-aminomethyldihydrolipoyl]-L-lysyl-[protein] + (6S)-5,6,7,8-tetrahydrofolate = N(6)-[(R)-dihydrolipoyl]-L-lysyl-[protein] + (6R)-5,10-methylene-5,6,7,8-tetrahydrofolate + NH4(+). The glycine cleavage system catalyzes the degradation of glycine. The polypeptide is Aminomethyltransferase (Geobacillus sp. (strain WCH70)).